A 564-amino-acid polypeptide reads, in one-letter code: Arginine--tRNA ligase (564 aa).

The 'HIGH' region signature appears at 122-132 (PNIAKPFSIGH).

The protein belongs to the class-I aminoacyl-tRNA synthetase family. As to quaternary structure, monomer.

Its subcellular location is the cytoplasm. The enzyme catalyses tRNA(Arg) + L-arginine + ATP = L-arginyl-tRNA(Arg) + AMP + diphosphate. In Lactococcus lactis subsp. lactis (strain IL1403) (Streptococcus lactis), this protein is Arginine--tRNA ligase.